Consider the following 101-residue polypeptide: Apolipoprotein C-II (101 aa).

The first 22 residues, 1–22, serve as a signal peptide directing secretion; it reads MGTRFLLALCLVLLVLGFEVQG. The propeptide at 23–28 is removed in mature form; that stretch reads AQLPQQ. Positions 66–74 are lipid binding; sequence AVDEKLRDL. Residues 78–101 are lipoprotein lipase cofactor; that stretch reads STAAMSTYTGIFTDQVLSVLKGEE.

This sequence belongs to the apolipoprotein C2 family. In terms of processing, proapolipoprotein C-II is synthesized as a sialic acid containing glycoprotein which is subsequently desialylated prior to its proteolytic processing. Post-translationally, proapolipoprotein C-II, the major form found in plasma undergoes proteolytic cleavage of its N-terminal hexapeptide to generate apolipoprotein C-II, which occurs as the minor form in plasma.

It is found in the secreted. Functionally, component of chylomicrons, very low-density lipoproteins (VLDL), low-density lipoproteins (LDL), and high-density lipoproteins (HDL) in plasma. Plays an important role in lipoprotein metabolism as an activator of lipoprotein lipase. Both proapolipoprotein C-II and apolipoprotein C-II can activate lipoprotein lipase. This chain is Apolipoprotein C-II (APOC2), found in Papio anubis (Olive baboon).